The sequence spans 653 residues: 4-hydroxy-2,2'-bipyrrole-5-methanol synthase PigH (653 aa).

The 78-residue stretch at 7–84 folds into the Carrier domain; it reads ETYETLKQSV…DALDGILQRE (78 aa). Ser45 bears the O-(pantetheine 4'-phosphoryl)serine mark. 354–355 is a pyridoxal 5'-phosphate binding site; the sequence is GY. Residue His379 coordinates substrate. Positions 426, 454, and 482 each coordinate pyridoxal 5'-phosphate. At Lys485 the chain carries N6-(pyridoxal phosphate)lysine. The chain crosses the membrane as a helical span at residues 512–532; the sequence is VFAATIPAPVAAGVIASIDVM.

It depends on pyridoxal 5'-phosphate as a cofactor.

It is found in the membrane. It participates in antibiotic biosynthesis; prodigiosin biosynthesis. Its function is as follows. Involved in the biosynthesis of 4-methoxy-2,2'-bipyrrole-5-carbaldehyde (MBC), one of the terminal products involved in the biosynthesis of the red antibiotic prodigiosin (Pig). Carrier of the L-malonyl group (malonyl-S-PigH), which is decarboxylated by PigJ to yield a C2 carbanion acetyl-S-PigH. Then the pyrrolyl group of pyrrolyl-S-cysteinyl PigJ intermediate is captured by the C2 carbanion acetyl-S-PigH to yield the pyrrolyl-beta-ketoacyl-S-PigH. In the last step, PigH catalyzes the decarboxylative condensation between the pyrrolyl-beta-ketoacyl (pyrrolyl-beta-ketoacyl-S-PigH) and L-serine to yield 4-hydroxy-2,2'-bipyrrole-5-methanol (HBM). This chain is 4-hydroxy-2,2'-bipyrrole-5-methanol synthase PigH, found in Serratia sp. (strain ATCC 39006) (Prodigiosinella confusarubida).